The primary structure comprises 231 residues: Monothiol glutaredoxin-6 (231 aa).

The N-terminal stretch at 1 to 29 (MIPSNKRNARILSITTLLLLLVFFVAQNA) is a signal peptide. Positions 116–219 (QKEYSLILDL…ESLQVWSDGK (104 aa)) constitute a Glutaredoxin domain. Cys-136 is a [2Fe-2S] cluster binding site.

The protein belongs to the glutaredoxin family. Monothiol subfamily.

Its subcellular location is the vacuole. This Saccharomyces cerevisiae (strain ATCC 204508 / S288c) (Baker's yeast) protein is Monothiol glutaredoxin-6 (GRX6).